The following is a 506-amino-acid chain: MKHFSLLFIFLVILLATSYSDAFTRNSFPKDFLFGAATSAYQWEGAVAEDGRTPSVWDTFSNSYDTGNGDVTSDGYHKYKEDVKLMATMGLESFRFSISWSRLIPNGRGLINPKGLLFYNNLIKDLKSHGIEPHVTLYHYDLPQSLEDEYGGWINRKIIEDFTAYADVCFREFGEDVKLWTTINEATIFAIGSYDQGTAPPGHCSPNKFVNCSTGNSSTEPYIAGHNILLAHASASKLYKLKYKSKQKGSIGLSIFAFGLSPYTNSKDDEIATQRAKTFLYGWMLKPLVFGDYPDEMKKTVGSRLPVFSEEESEQVKGSSDFIGIIHYTTFYVTNHQPSASLFPSMGEGFFKDMGVYIIPTGNSSFLVWEATPWGLEGILEYIKQSYNNPPVYILENGMPMVRDSTLQDTQRIEYIQAYIDAVLNAMKNGSDTRGYFVWSMVDVYEILSGYTTSFGMYHVNFSDPGRKRTPKLSASWYTGFLNGTIDVASQDTIQLWSNFSVSSSL.

Residues 1-22 form the signal peptide; the sequence is MKHFSLLFIFLVILLATSYSDA. A beta-D-glucoside is bound by residues Gln-42, His-139, and 184–185; that span reads NE. Residue Glu-185 is the Proton donor of the active site. Cys-204 and Cys-212 are oxidised to a cystine. Asn-211 and Asn-216 each carry an N-linked (GlcNAc...) asparagine glycan. Position 328 (Tyr-328) interacts with a beta-D-glucoside. Asn-363 is a glycosylation site (N-linked (GlcNAc...) asparagine). Glu-396 is an a beta-D-glucoside binding site. Glu-396 acts as the Nucleophile in catalysis. A glycan (N-linked (GlcNAc...) asparagine) is linked at Asn-429. A beta-D-glucoside contacts are provided by Trp-439 and Phe-455. N-linked (GlcNAc...) asparagine glycans are attached at residues Asn-461, Asn-483, and Asn-499.

This sequence belongs to the glycosyl hydrolase 1 family.

The catalysed reaction is Hydrolysis of terminal, non-reducing beta-D-glucosyl residues with release of beta-D-glucose.. This Arabidopsis thaliana (Mouse-ear cress) protein is Beta-glucosidase 9.